The following is a 388-amino-acid chain: Proteasomal ubiquitin receptor ADRM1 homolog rpn1302 (388 aa).

A Pru domain is found at 15-132 (RGKYGLVSVK…SLINQLIADP (118 aa)). 2 disordered regions span residues 202-227 (RASSESNLNGPHATAGENGEDHEEAT) and 368-388 (SDGEVEEEGDVEMRESNEKDE). Acidic residues predominate over residues 368 to 377 (SDGEVEEEGD). A compositionally biased stretch (basic and acidic residues) spans 378-388 (VEMRESNEKDE).

This sequence belongs to the ADRM1 family. Component of the 19S proteasome regulatory particle complex. The 2 S.pombe rpn13 homologs, rpn1301 and rpn1302 are present at a 0.2-1 ratio.

The protein localises to the cytoplasm. The protein resides in the nucleus. Its function is as follows. Component of the 26S proteasome, a multiprotein complex involved in the ATP-dependent degradation of ubiquitinated proteins. This complex plays a key role in the maintenance of protein homeostasis by removing misfolded or damaged proteins, which could impair cellular functions, and by removing proteins whose functions are no longer required. Therefore, the proteasome participates in numerous cellular processes, including cell cycle progression, apoptosis, or DNA damage repair. Within the complex, functions as a proteasomal ubiquitin receptor. The polypeptide is Proteasomal ubiquitin receptor ADRM1 homolog rpn1302 (rpn1302) (Schizosaccharomyces pombe (strain 972 / ATCC 24843) (Fission yeast)).